Here is a 238-residue protein sequence, read N- to C-terminus: Ribonuclease HII (238 aa).

The RNase H type-2 domain maps to 12 to 197 (GIVAGVDEAG…VLELLTDDLL (186 aa)). A divalent metal cation contacts are provided by D18, E19, and D107.

It belongs to the RNase HII family. Mn(2+) is required as a cofactor. Mg(2+) serves as cofactor.

The protein localises to the cytoplasm. The enzyme catalyses Endonucleolytic cleavage to 5'-phosphomonoester.. Functionally, endonuclease that specifically degrades the RNA of RNA-DNA hybrids. This chain is Ribonuclease HII (rnhB), found in Thermotoga maritima (strain ATCC 43589 / DSM 3109 / JCM 10099 / NBRC 100826 / MSB8).